The chain runs to 235 residues: Endonuclease V (235 aa).

Residues Asp-47 and Asp-117 each coordinate Mg(2+).

The protein belongs to the endonuclease V family. The cofactor is Mg(2+).

It localises to the cytoplasm. The catalysed reaction is Endonucleolytic cleavage at apurinic or apyrimidinic sites to products with a 5'-phosphate.. DNA repair enzyme involved in the repair of deaminated bases. Selectively cleaves double-stranded DNA at the second phosphodiester bond 3' to a deoxyinosine leaving behind the intact lesion on the nicked DNA. This Protochlamydia amoebophila (strain UWE25) protein is Endonuclease V.